The sequence spans 3925 residues: Polyketide synthase ThaH (3925 aa).

Positions 1–56 are disordered; the sequence is MPRWRPTWLKRLSCPKQPRHPTHPKHPTHPKHPKHPKHPRHPKHPRISRRCSSASA. Residues 17–49 show a composition bias toward basic residues; the sequence is QPRHPTHPKHPTHPKHPKHPKHPRHPKHPRISR. A Carrier 1 domain is found at 1073–1148; the sequence is GLVGGLEGEV…DIAGYIASAE (76 aa). At S1108 the chain carries O-(pantetheine 4'-phosphoryl)serine. Residues 1166-1182 show a composition bias toward low complexity; that stretch reads AAVATPPGRPAGEAAGA. The interval 1166-1233 is disordered; it reads AAVATPPGRP…GEPARAASHG (68 aa). The span at 1183–1196 shows a compositional bias: basic and acidic residues; sequence QRDRAPRAADERAD. A compositionally biased stretch (low complexity) spans 1202–1216; it reads PSDAHASKAAAIDSR. The 431-residue stretch at 1237–1667 folds into the Ketosynthase family 3 (KS3) 1 domain; sequence ADGLAIIGIA…GTNAHALVEA (431 aa). Active-site for beta-ketoacyl synthase 1 activity residues include C1413, H1549, and H1589. The segment at 1679–1698 is disordered; that stretch reads GATGAPDVPDAPDAPDAPDA. The tract at residues 1844–1969 is N-terminal hotdog fold; the sequence is HPLLHRNVST…GHVQRIAEPA (126 aa). A PKS/mFAS DH domain is found at 1844-2143; the sequence is HPLLHRNVST…ARRFVREPAR (300 aa). The Proton acceptor; for dehydratase activity role is filled by H1873. A C-terminal hotdog fold region spans residues 1983–2143; that stretch reads AAPRLSAARC…ARRFVREPAR (161 aa). D2043 acts as the Proton donor; for dehydratase activity in catalysis. Low complexity-rich tracts occupy residues 2594-2607 and 2632-2646; these read DDPA…AASS and PAAA…ASDA. Disordered stretches follow at residues 2594–2613 and 2619–2657; these read DDPA…LPEM and APAD…AAPA. The Carrier 2 domain maps to 2664-2737; that stretch reads EHALALLKRL…ELACYFVAHH (74 aa). At S2698 the chain carries O-(pantetheine 4'-phosphoryl)serine. Residues 2753–2768 show a composition bias toward low complexity; sequence LAPAPAQPLAPRAPSA. The disordered stretch occupies residues 2753-2841; sequence LAPAPAQPLA…AHAPAQASAP (89 aa). Positions 2770–2779 are enriched in basic and acidic residues; sequence PARDAARSLE. 2 stretches are compositionally biased toward low complexity: residues 2789 to 2813 and 2823 to 2841; these read GQEP…QASA and ETRT…ASAP. The region spanning 2847–3286 is the Ketosynthase family 3 (KS3) 2 domain; that stretch reads AFDIAIVGLA…GSNAHLIVEE (440 aa). Catalysis depends on for beta-ketoacyl synthase 2 activity residues C3022, H3157, and H3197. Low complexity-rich tracts occupy residues 3512-3524 and 3578-3592; these read ASTA…PSPA and AAAA…SSPS. 2 disordered regions span residues 3512 to 3531 and 3578 to 3619; these read ASTA…STGE and AAAA…AAPD. Over residues 3593–3603 the composition is skewed to pro residues; sequence PSSPSPLPSSP. Positions 3604-3619 are enriched in low complexity; the sequence is PRMSSRQHASPAAAPD. Positions 3622-3699 constitute a Carrier 3 domain; that stretch reads AALLDIEAFL…AMARHVSSNA (78 aa). S3659 is modified (O-(pantetheine 4'-phosphoryl)serine). Positions 3734 to 3754 are disordered; the sequence is PAPFASAAPPEPPASPARADG. The Carrier 4 domain occupies 3762-3839; sequence TSLDAIRAHL…ALARFVGTQL (78 aa). S3799 is subject to O-(pantetheine 4'-phosphoryl)serine.

The protein belongs to the ATP-dependent AMP-binding enzyme family. Pantetheine 4'-phosphate serves as cofactor.

The protein resides in the cytoplasm. The protein operates within antibiotic biosynthesis. Functionally, involved in production of the polyketide antibiotic thailandamide. This Burkholderia thailandensis (strain ATCC 700388 / DSM 13276 / CCUG 48851 / CIP 106301 / E264) protein is Polyketide synthase ThaH.